We begin with the raw amino-acid sequence, 249 residues long: Probable transcriptional regulatory protein ZMO0153 (249 aa).

It belongs to the TACO1 family.

It is found in the cytoplasm. The protein is Probable transcriptional regulatory protein ZMO0153 of Zymomonas mobilis subsp. mobilis (strain ATCC 31821 / ZM4 / CP4).